The chain runs to 244 residues: MTNLLPEMAEIWQQTLNWQPTVQQQEQFQRLYELILEGNRQLNLTRITDPQEFWEKHLWDSLRGILPLLSGNLPPASPTIIDIGTGAGFPGVPVAMTVPNCTITLLDSTQKKITFLDNILTELALTNTKTIVGRAEKIGQHPQHRMAYDIALIRAVGAVSVCAEYTLPLLKQGGLAIIYRGNWTKDETTALQNAVKLLGGVIESIEQFTTPLSHSIRHCVYLRKVATTPVQFPRPIGVPTQKPL.

Residues Gly-84, Phe-89, 107-109 (DST), 135-136 (AE), and Arg-154 contribute to the S-adenosyl-L-methionine site.

Belongs to the methyltransferase superfamily. RNA methyltransferase RsmG family.

It is found in the cytoplasm. In terms of biological role, specifically methylates the N7 position of a guanine in 16S rRNA. The chain is Ribosomal RNA small subunit methyltransferase G from Nostoc punctiforme (strain ATCC 29133 / PCC 73102).